The sequence spans 306 residues: 2-phospho-L-lactate transferase (306 aa).

Asp48 lines the 7,8-didemethyl-8-hydroxy-5-deazariboflavin pocket.

It belongs to the CofD family. Homodimer. The cofactor is Mg(2+).

It carries out the reaction (2S)-lactyl-2-diphospho-5'-guanosine + 7,8-didemethyl-8-hydroxy-5-deazariboflavin = oxidized coenzyme F420-0 + GMP + H(+). It participates in cofactor biosynthesis; coenzyme F420 biosynthesis. In terms of biological role, catalyzes the transfer of the 2-phospholactate moiety from (2S)-lactyl-2-diphospho-5'-guanosine to 7,8-didemethyl-8-hydroxy-5-deazariboflavin (FO) with the formation of oxidized coenzyme F420-0 and GMP. The chain is 2-phospho-L-lactate transferase from Methanococcoides burtonii (strain DSM 6242 / NBRC 107633 / OCM 468 / ACE-M).